The following is a 398-amino-acid chain: DNA-directed RNA polymerase III subunit RPC4 (398 aa).

Residues 1-149 are disordered; sequence MSEGNAAGEP…IKKEKRETDE (149 aa). Serine 2 bears the N-acetylserine mark. Serine 42 carries the phosphoserine modification. 3 stretches are compositionally biased toward basic and acidic residues: residues 66-100, 116-128, and 140-149; these read KIKE…RGRP, MMKK…KTVD, and IKKEKRETDE. Residues lysine 68 and lysine 78 each participate in a glycyl lysine isopeptide (Lys-Gly) (interchain with G-Cter in SUMO2) cross-link. 3 positions are modified to omega-N-methylarginine: arginine 95, arginine 97, and arginine 99. Glycyl lysine isopeptide (Lys-Gly) (interchain with G-Cter in SUMO2) cross-links involve residues lysine 141, lysine 152, lysine 160, lysine 190, lysine 199, lysine 206, lysine 220, lysine 285, lysine 302, and lysine 396. The interval 191–244 is disordered; that stretch reads EESEEPEAKPFSAGPKEEDMEVDVPAVKVKEEPRDEEEEAKVKAPPRAARKTPG.

This sequence belongs to the eukaryotic RPC4/POLR3D RNA polymerase subunit family. In terms of assembly, component of the RNA polymerase III complex consisting of 17 subunits: a ten-subunit horseshoe-shaped catalytic core composed of POLR3A/RPC1, POLR3B/RPC2, POLR1C/RPAC1, POLR1D/RPAC2, POLR3K/RPC10, POLR2E/RPABC1, POLR2F/RPABC2, POLR2H/RPABC3, POLR2K/RPABC4 and POLR2L/RPABC5; a mobile stalk composed of two subunits POLR3H/RPC8 and CRCP/RPC9, protruding from the core and functioning primarily in transcription initiation; and additional subunits homologous to general transcription factors of the RNA polymerase II machinery, POLR3C/RPC3-POLR3F/RPC6-POLR3G/RPC7 heterotrimer required for transcription initiation and POLR3D/RPC4-POLR3E/RPC5 heterodimer involved in both transcription initiation and termination. Sumoylation on Lys-141 can serve as a signal to mark misfolded Pol III for proteasomal degradation.

It is found in the nucleus. DNA-dependent RNA polymerase catalyzes the transcription of DNA into RNA using the four ribonucleoside triphosphates as substrates. Specific peripheric component of RNA polymerase III (Pol III) which synthesizes small non-coding RNAs including 5S rRNA, snRNAs, tRNAs and miRNAs from at least 500 distinct genomic loci. Enables recruitment of Pol III at transcription initiation site and drives transcription initiation from both type 2 and type 3 DNA promoters. Required for efficient transcription termination and reinitiation. Pol III plays a key role in sensing and limiting infection by intracellular bacteria and DNA viruses. Acts as nuclear and cytosolic DNA sensor involved in innate immune response. Can sense non-self dsDNA that serves as template for transcription into dsRNA. The non-self RNA polymerase III transcripts, such as Epstein-Barr virus-encoded RNAs (EBERs) induce type I interferon and NF-kappa-B through the RIG-I pathway. This is DNA-directed RNA polymerase III subunit RPC4 from Mus musculus (Mouse).